The following is a 129-amino-acid chain: D-ribose pyranase 1 (129 aa).

His20 (proton donor) is an active-site residue. Residues Asp28, His96, and 118–120 contribute to the substrate site; that span reads YSN.

This sequence belongs to the RbsD / FucU family. RbsD subfamily. In terms of assembly, homodecamer.

It is found in the cytoplasm. The enzyme catalyses beta-D-ribopyranose = beta-D-ribofuranose. It participates in carbohydrate metabolism; D-ribose degradation; D-ribose 5-phosphate from beta-D-ribopyranose: step 1/2. Catalyzes the interconversion of beta-pyran and beta-furan forms of D-ribose. The sequence is that of D-ribose pyranase 1 from Rubrobacter xylanophilus (strain DSM 9941 / JCM 11954 / NBRC 16129 / PRD-1).